We begin with the raw amino-acid sequence, 195 residues long: Probable thymidylate kinase (195 aa).

ATP is bound at residue Gly7 to Thr14.

It belongs to the thymidylate kinase family.

It catalyses the reaction dTMP + ATP = dTDP + ADP. In Methanosphaera stadtmanae (strain ATCC 43021 / DSM 3091 / JCM 11832 / MCB-3), this protein is Probable thymidylate kinase.